A 60-amino-acid chain; its full sequence is Metallothionein (60 aa).

The segment at 1 to 28 (MDCACATGGSCSCAGSCKCENCKCTSCK) is beta. A divalent metal cation contacts are provided by Cys3, Cys5, Cys11, Cys13, Cys17, Cys19, Cys22, Cys24, Cys27, Cys31, Cys32, Cys34, Cys35, Cys39, Cys42, Cys46, Cys48, Cys56, Cys58, and Cys59. The tract at residues 29–60 (KSCCSCCPSECEKCGQGCVCKGGSSEKCSCCN) is alpha.

This sequence belongs to the metallothionein superfamily. Type 1 family.

Functionally, metallothioneins have a high content of cysteine residues that bind various heavy metals. The sequence is that of Metallothionein (MT-A) from Ambystoma mexicanum (Axolotl).